We begin with the raw amino-acid sequence, 194 residues long: Thymidine kinase (194 aa).

ATP contacts are provided by residues 15-22 (GSMFSGKS) and 88-91 (DEVQ). E89 (proton acceptor) is an active-site residue. Residues C145, C148, C183, and H186 each coordinate Zn(2+).

Belongs to the thymidine kinase family. Homotetramer.

The protein localises to the cytoplasm. It carries out the reaction thymidine + ATP = dTMP + ADP + H(+). This chain is Thymidine kinase, found in Bacillus licheniformis (strain ATCC 14580 / DSM 13 / JCM 2505 / CCUG 7422 / NBRC 12200 / NCIMB 9375 / NCTC 10341 / NRRL NRS-1264 / Gibson 46).